A 317-amino-acid polypeptide reads, in one-letter code: Probable porphobilinogen deaminase (317 aa).

Cys-234 bears the S-(dipyrrolylmethanemethyl)cysteine mark.

It belongs to the HMBS family. It depends on dipyrromethane as a cofactor.

It carries out the reaction 4 porphobilinogen + H2O = hydroxymethylbilane + 4 NH4(+). Its pathway is porphyrin-containing compound metabolism; protoporphyrin-IX biosynthesis; coproporphyrinogen-III from 5-aminolevulinate: step 2/4. Its function is as follows. Tetrapolymerization of the monopyrrole PBG into the hydroxymethylbilane pre-uroporphyrinogen in several discrete steps. This is Probable porphobilinogen deaminase from Methanosarcina acetivorans (strain ATCC 35395 / DSM 2834 / JCM 12185 / C2A).